A 419-amino-acid chain; its full sequence is MGTLSAPPCTQRIKWKGLLLTASLLNFWNLPTTAQVTIEAEPTKVSEGKDVLLLVHNLPQNLTGYIWYKGQMRDLYHYITSYVVDGEIIIYGPAYSGRETAYSNASLLIQNVTREDAGSYTLHIIKGDDGTRGVTGRFTFTLHLETPKPSISSSNLNPRETMEAVSLTCDPETPDASYLWWMNGQSLPMTHSLKLSETNRTLFLLGVTKYTAGPYECEIRNPVSASRSDPVTLNLLPKLPKPYITINNLNPRENKDVLNFTCEPKSENYTYIWWLNGQSLPVSPRVKRPIENRILILPSVTRNETGPYQCEIRDRYGGIRSDPVTLNVLYGPDLPRIYPSFTYYRSGEVLYLSCSADSNPPAQYSWTINEKFQLPGQKLFIRHITTKHSGLYVCSVRNSATGKESSKSMTVEVSDWTVP.

Residues 1-34 (MGTLSAPPCTQRIKWKGLLLTASLLNFWNLPTTA) form the signal peptide. One can recognise an Ig-like V-type domain in the interval 35–144 (QVTIEAEPTK…TGRFTFTLHL (110 aa)). Residues asparagine 61, asparagine 104, asparagine 111, asparagine 199, asparagine 259, asparagine 268, and asparagine 303 are each glycosylated (N-linked (GlcNAc...) asparagine). Ig-like C2-type domains are found at residues 149 to 234 (PSIS…VTLN), 240 to 327 (PKPY…VTLN), and 335 to 410 (PRIY…KSMT). A disulfide bridge links cysteine 169 with cysteine 217. Disulfide bonds link cysteine 262/cysteine 310 and cysteine 354/cysteine 394.

The protein belongs to the immunoglobulin superfamily. CEA family.

Its subcellular location is the secreted. The chain is Pregnancy-specific beta-1-glycoprotein 1 (PSG1) from Homo sapiens (Human).